We begin with the raw amino-acid sequence, 446 residues long: uncharacterized protein (446 aa).

A run of 12 helical transmembrane segments spans residues 20–40 (LIGVGCTIGTGFFLGSSIAIV), 42–62 (SGFSVLLSFLIAGIGTYFVFE), 95–115 (WVYWTSEMLITGSQLTAISLF), 127–147 (VFASIYAVLGLLIIFTGLSVF), 160–180 (AAIFMFIVIAILALCGILSGG), 205–225 (LIYAFYAFGGIEVMGLMAVHL), 237–257 (LMLATLAIIYIISIGLALLLV), 284–304 (IFNGIFIIAGFSTLVASLFAV), 331–351 (WPALGLTFAGLVLSIILSLVL), 355–375 (IYEHMTTAAGLMLLYTWLFIL), 388–408 (GKTQIYLAMVLIAAAVSGTLF), and 414–434 (PGFFVSIGFLVIIAIVTMIYQ).

Belongs to the amino acid-polyamine-organocation (APC) superfamily.

Its subcellular location is the cell membrane. This is an uncharacterized protein from Bacillus subtilis (strain 168).